The primary structure comprises 71 residues: Putative antitoxin VapB14 (71 aa).

Putative antitoxin component of a possible type II toxin-antitoxin (TA) system. The cognate toxin is VapB14. This chain is Putative antitoxin VapB14 (vapB14), found in Mycobacterium tuberculosis (strain ATCC 25618 / H37Rv).